We begin with the raw amino-acid sequence, 209 residues long: Nascent polypeptide-associated complex subunit alpha-like protein 5 (209 aa).

Positions 23-71 (EKEDDVVVEDVKDGEEEDDDEDDEDVEVEGEGGNENAKQSRSEKKSRKA) are disordered. A compositionally biased stretch (acidic residues) spans 25–54 (EDDVVVEDVKDGEEEDDDEDDEDVEVEGEG). The region spanning 62 to 127 (SRSEKKSRKA…AKVDDLSSQL (66 aa)) is the NAC-A/B domain. Positions 170–207 (VEARDIDLVMTQAGVSKAKAVSALKANDGDIVSAIMEL) constitute a UBA domain.

The protein belongs to the NAC-alpha family.

May promote appropriate targeting of ribosome-nascent polypeptide complexes. This is Nascent polypeptide-associated complex subunit alpha-like protein 5 from Arabidopsis thaliana (Mouse-ear cress).